A 546-amino-acid chain; its full sequence is Cytochrome P450 monooxygenase fumoB (546 aa).

The helical transmembrane segment at 13–33 threads the bilayer; the sequence is LGYYEKLAGILGIIGLVLLFW. N-linked (GlcNAc...) asparagine glycosylation occurs at Asn-147. Heme is bound at residue Cys-488.

This sequence belongs to the cytochrome P450 family. Heme serves as cofactor.

It is found in the membrane. It participates in secondary metabolite biosynthesis. In terms of biological role, cytochrome P450 monooxygenase; part of the gene cluster that mediates the biosynthesis of fumosorinone, a 2-pyridone alkaloid that acts as an inhibitor of protein tyrosine phosphatase 1B which is implicated asa negative regulator of insulin receptor signaling and a potential drug target for the treatment of type II diabetes and other associated metabolic syndromes. The polyketide-amino acid backbone of fumosorinone is first assembled by the PKS-NRPS hybrid fumoS. The PKS modules condense one acetyl-CoA starter unit with 7 malonyl-CoA units, programmed C-methylations occurring after the first 3 and the sixth extensions, and cycles of full reduction occurring after the first 2 extensions. Because fumoS lacks a designated enoyl reductase (ER) domain, the required activity is provided the enoyl reductase fumoC. Upon formation of the polyketide backbone on the thiotemplate, the polyketide is transferred to the NRPS module and linked to tyrosine to produce the acyltetramic acid intermediate called prefumosorinone A. The cytochrome P450 monooxygenase fumoA then probably catalyzes an unprecedented oxidative ring expansion of prefumosorinone A to form prefumosorinone B which contains the 2-pyridone core of fumosorinone. The cytochrome P450 monooxygenase fumoB might hydroxylate the nitrogen of prefumosorinone B, but not the acyltetramic acid prefumosorinone A, to form fumosorinone. This chain is Cytochrome P450 monooxygenase fumoB, found in Cordyceps fumosorosea (strain ARSEF 2679) (Isaria fumosorosea).